Reading from the N-terminus, the 1049-residue chain is Protein phosphatase Slingshot homolog 1 (1049 aa).

Residues 1–12 (MALVTLQRSPTP) show a composition bias toward polar residues. Residues 1–28 (MALVTLQRSPTPSAASSSASNSELEAGS) form a disordered region. The residue at position 2 (Ala-2) is an N-acetylalanine. Residues 13-25 (SAASSSASNSELE) are compositionally biased toward low complexity. Phosphoserine occurs at positions 37 and 57. The DEK-C domain maps to 249-304 (ERTERLIKAKLRSIMMSQDLENVTSKEIRNELEKQMNCNLKELKEFIDNEMLLILG). One can recognise a Tyrosine-protein phosphatase domain in the interval 308–449 (KPSLIFDHLY…LSEYEGILDA (142 aa)). Residue Cys-393 is the Phosphocysteine intermediate of the active site. A disordered region spans residues 456–499 (KLWRQQTDSSLQQPVDDPAGPGDFLPETPDGTPESQLPFLDDAA). Polar residues predominate over residues 458 to 468 (WRQQTDSSLQQ). Ser-515 bears the Phosphoserine mark. Disordered stretches follow at residues 544–603 (AAPP…RWGQ), 693–787 (HLAS…KPAK), 825–899 (HTKE…KSPP), and 923–955 (PTSS…KQRT). Residues 564–573 (CEKDVKKKLE) are compositionally biased toward basic and acidic residues. Ser-576 carries the post-translational modification Phosphoserine. Over residues 731-742 (GAALEPPASLLE) the composition is skewed to low complexity. The span at 772 to 787 (VIKEESSPKKDMKPAK) shows a compositional bias: basic and acidic residues. Phosphoserine is present on Ser-897. The tract at residues 897–1049 (SPPPFFYRLD…LKSPSWMSKS (153 aa)) is interaction with YWHAG. Low complexity predominate over residues 925 to 943 (SSSMSSNLTRSSSSDSIHS). Ser-978 is modified (phosphoserine). The disordered stretch occupies residues 989-1049 (TEDLSSEADP…LKSPSWMSKS (61 aa)). The span at 1001–1013 (VADSQDTTLSESS) shows a compositional bias: polar residues.

Belongs to the protein-tyrosine phosphatase family. In terms of assembly, interacts with actin and this stimulates phosphatase activity. Also interacts with LIMK1 and with the 14-3-3 proteins YWHAB, YWHAG, YWHAQ, and YWHAZ. Interaction with 14-3-3 proteins inhibits phosphatase activity and also blocks recruitment to lamellipodia and stimulation by actin. Post-translationally, phosphorylated. Inhibitory phosphorylation by PAK4 promotes binding to YWHAZ. Phosphorylation at Ser-978 is decreased by stimuli which promote actin reorganization and lamellipodia formation. Can be dephosphorylated and activated by PPP3CA/calcineurin A. Phosphorylation decreases immediately prior to telophase.

It is found in the cytoplasm. The protein resides in the cytoskeleton. Its subcellular location is the cell projection. It localises to the lamellipodium. The protein localises to the cleavage furrow. It is found in the midbody. The catalysed reaction is O-phospho-L-tyrosyl-[protein] + H2O = L-tyrosyl-[protein] + phosphate. The enzyme catalyses O-phospho-L-seryl-[protein] + H2O = L-seryl-[protein] + phosphate. It carries out the reaction O-phospho-L-threonyl-[protein] + H2O = L-threonyl-[protein] + phosphate. Functionally, protein phosphatase which regulates actin filament dynamics. Dephosphorylates and activates the actin binding/depolymerizing factor cofilin, which subsequently binds to actin filaments and stimulates their disassembly. Inhibitory phosphorylation of cofilin is mediated by LIMK1, which may also be dephosphorylated and inactivated by this protein. The protein is Protein phosphatase Slingshot homolog 1 of Homo sapiens (Human).